The following is a 201-amino-acid chain: Cold shock domain-containing protein 4 (201 aa).

Serine 2 bears the N-acetylserine mark. One can recognise a CSD domain in the interval 14–81 (RRKGTVKWFD…RPKAIEVSGP (68 aa)). A disordered region spans residues 66-109 (EVDNSGRPKAIEVSGPDGAPVQGNSGGGGSSGGRGGFGGGGGRG). The span at 89-109 (NSGGGGSSGGRGGFGGGGGRG) shows a compositional bias: gly residues. 2 consecutive CCHC-type zinc fingers follow at residues 136-153 (NSCFKCGEPGHMARECSQ) and 180-197 (LSCYSCGESGHFARDCTS).

This sequence belongs to the cold shock protein (CSP) family. As to expression, mostly expressed in shoot apices and siliques, and, to a lower extent, in roots, cotyledons, stems, shoots, leaves, floral buds and flowers. Present in shoot apical meristems and siliques (at protein level). Very low levels are observed in cv. Landsberg erecta compared to cv. Columbia.

The protein resides in the cytoplasm. It localises to the nucleus. It is found in the nucleolus. Its function is as follows. Chaperone that binds to and unwinds RNA and both single-stranded DNA and double-stranded DNA (ssDNA and dsDNA DNA). Regulates the flowering transition and flower and seed development, particularly at late stages of embryo development, through regulation of gene expression (including MEA, FIS2, AP1, CAL, AG and SHP2). The protein is Cold shock domain-containing protein 4 (CSP4) of Arabidopsis thaliana (Mouse-ear cress).